A 479-amino-acid polypeptide reads, in one-letter code: Ribosomal RNA small subunit methyltransferase F (479 aa).

S-adenosyl-L-methionine contacts are provided by residues 125–131, E149, D176, and D194; that span reads AAAPGSK. The active-site Nucleophile is the C247.

It belongs to the class I-like SAM-binding methyltransferase superfamily. RsmB/NOP family.

The protein resides in the cytoplasm. The catalysed reaction is cytidine(1407) in 16S rRNA + S-adenosyl-L-methionine = 5-methylcytidine(1407) in 16S rRNA + S-adenosyl-L-homocysteine + H(+). Its function is as follows. Specifically methylates the cytosine at position 1407 (m5C1407) of 16S rRNA. The chain is Ribosomal RNA small subunit methyltransferase F from Salmonella arizonae (strain ATCC BAA-731 / CDC346-86 / RSK2980).